The sequence spans 496 residues: Transcription factor CP2 (496 aa).

In terms of domain architecture, Grh/CP2 DB spans E61 to S300. The tract at residues E133 to V386 is DNA-binding. Disordered stretches follow at residues F238–S268 and S296–T327. Over residues K241–Y265 the composition is skewed to basic and acidic residues.

Belongs to the grh/CP2 family. CP2 subfamily. In terms of assembly, component of the SSP (stage selector protein) complex, which appears to be a heteromer of TFCP2 and 2 copies of NFE4. As to expression, expressed in the epiblast at the pre-primitive streak stage. At the primitive streak stage, expressed in the extending primitive streak and in the prospective neural plate. At stages 7 and 8, expressed in the neural folds, somites and in the regressing primitive streak. At stage 12, ubiquitously expressed in the whole embryo.

It is found in the nucleus. Its function is as follows. Binds the B-response element 5'-CAAGTCCAGGCAAGT-3' of the ENS1/ERNI promoter. May be the major transcription activator thus being essential for its expression. This is Transcription factor CP2 (TFCP2) from Gallus gallus (Chicken).